Here is a 141-residue protein sequence, read N- to C-terminus: Transcriptional regulator MraZ (141 aa).

SpoVT-AbrB domains are found at residues 5-47 and 75-118; these read EYNH…PNEE and AADC…SKER.

Belongs to the MraZ family. In terms of assembly, forms oligomers.

It localises to the cytoplasm. The protein localises to the nucleoid. The polypeptide is Transcriptional regulator MraZ (Lachnoclostridium phytofermentans (strain ATCC 700394 / DSM 18823 / ISDg) (Clostridium phytofermentans)).